The following is a 280-amino-acid chain: Phosphatidylserine decarboxylase proenzyme (280 aa).

Catalysis depends on charge relay system; for autoendoproteolytic cleavage activity residues aspartate 88, histidine 144, and serine 247. Serine 247 functions as the Schiff-base intermediate with substrate; via pyruvic acid; for decarboxylase activity in the catalytic mechanism. Pyruvic acid (Ser); by autocatalysis is present on serine 247.

The protein belongs to the phosphatidylserine decarboxylase family. PSD-B subfamily. Prokaryotic type I sub-subfamily. In terms of assembly, heterodimer of a large membrane-associated beta subunit and a small pyruvoyl-containing alpha subunit. Pyruvate serves as cofactor. Is synthesized initially as an inactive proenzyme. Formation of the active enzyme involves a self-maturation process in which the active site pyruvoyl group is generated from an internal serine residue via an autocatalytic post-translational modification. Two non-identical subunits are generated from the proenzyme in this reaction, and the pyruvate is formed at the N-terminus of the alpha chain, which is derived from the carboxyl end of the proenzyme. The autoendoproteolytic cleavage occurs by a canonical serine protease mechanism, in which the side chain hydroxyl group of the serine supplies its oxygen atom to form the C-terminus of the beta chain, while the remainder of the serine residue undergoes an oxidative deamination to produce ammonia and the pyruvoyl prosthetic group on the alpha chain. During this reaction, the Ser that is part of the protease active site of the proenzyme becomes the pyruvoyl prosthetic group, which constitutes an essential element of the active site of the mature decarboxylase.

It is found in the cell membrane. The enzyme catalyses a 1,2-diacyl-sn-glycero-3-phospho-L-serine + H(+) = a 1,2-diacyl-sn-glycero-3-phosphoethanolamine + CO2. The protein operates within phospholipid metabolism; phosphatidylethanolamine biosynthesis; phosphatidylethanolamine from CDP-diacylglycerol: step 2/2. Its function is as follows. Catalyzes the formation of phosphatidylethanolamine (PtdEtn) from phosphatidylserine (PtdSer). The chain is Phosphatidylserine decarboxylase proenzyme from Stenotrophomonas maltophilia (strain R551-3).